A 193-amino-acid polypeptide reads, in one-letter code: Peptide deformylase 2 (193 aa).

Positions 100 and 142 each coordinate Fe cation. The active site involves Glu143. A Fe cation-binding site is contributed by His146.

It belongs to the polypeptide deformylase family. The cofactor is Fe(2+).

The catalysed reaction is N-terminal N-formyl-L-methionyl-[peptide] + H2O = N-terminal L-methionyl-[peptide] + formate. Its function is as follows. Removes the formyl group from the N-terminal Met of newly synthesized proteins. Requires at least a dipeptide for an efficient rate of reaction. N-terminal L-methionine is a prerequisite for activity but the enzyme has broad specificity at other positions. The sequence is that of Peptide deformylase 2 from Corynebacterium efficiens (strain DSM 44549 / YS-314 / AJ 12310 / JCM 11189 / NBRC 100395).